Consider the following 312-residue polypeptide: NAD-dependent protein deacylase Sirt4 (312 aa).

Residues 1-16 (MRVGQLLRFRSTSLRS) constitute a mitochondrion transit peptide. Residues 28–312 (KPVVEDDIKR…FDFRNSKSVS (285 aa)) form the Deacetylase sirtuin-type domain. NAD(+) contacts are provided by residues 53 to 73 (GAGI…VGLY) and 134 to 137 (QNVD). His152 serves as the catalytic Proton acceptor. The Zn(2+) site is built by Cys160, Cys163, Cys211, and Cys214. NAD(+) is bound by residues 251-253 (GSS), 277-279 (NIG), and Cys295.

This sequence belongs to the sirtuin family. Class II subfamily. Requires Zn(2+) as cofactor.

The protein resides in the mitochondrion matrix. The catalysed reaction is N(6)-acetyl-L-lysyl-[protein] + NAD(+) + H2O = 2''-O-acetyl-ADP-D-ribose + nicotinamide + L-lysyl-[protein]. Its function is as follows. NAD-dependent protein deacylase. Catalyzes the NAD-dependent hydrolysis of acyl groups from lysine residues. This chain is NAD-dependent protein deacylase Sirt4 (Sirt4), found in Drosophila melanogaster (Fruit fly).